Reading from the N-terminus, the 119-residue chain is MKQANQDRGTLLLALVAGLSINGTFAALFSSIVPFSVFPIISLVLTVYCLHQRYLNRTMPVGLPGLAAACFILGVLLYSTVVRAEYPDIGSNFFPAVLSVIMVFWIGAKMRNRKQEVAE.

Topologically, residues 1–8 (MKQANQDR) are cytoplasmic. A helical membrane pass occupies residues 9-28 (GTLLLALVAGLSINGTFAAL). The Periplasmic segment spans residues 29–31 (FSS). Residues 32-50 (IVPFSVFPIISLVLTVYCL) traverse the membrane as a helical segment. Topologically, residues 51 to 61 (HQRYLNRTMPV) are cytoplasmic. A helical membrane pass occupies residues 62–84 (GLPGLAAACFILGVLLYSTVVRA). Residues 85–88 (EYPD) are Periplasmic-facing. The chain crosses the membrane as a helical span at residues 89–108 (IGSNFFPAVLSVIMVFWIGA). Residues 109–119 (KMRNRKQEVAE) lie on the Cytoplasmic side of the membrane.

The protein resides in the cell inner membrane. The protein is Inner membrane protein YijD (yijD) of Escherichia coli O6:H1 (strain CFT073 / ATCC 700928 / UPEC).